Consider the following 363-residue polypeptide: Actin-related protein 7 (363 aa).

Met-1 bears the N-acetylmethionine mark.

The protein belongs to the actin family. Plant ARP7 subfamily. Mostly expressed in flowers, and, to a lower extent, in roots, seedlings, leaves and siliques (at protein level).

Its subcellular location is the nucleus. The protein resides in the cytoplasm. In terms of biological role, essential protein required during embryogenesis and all plant development stages, probably through a chromatin-mediated regulation of gene expression. The protein is Actin-related protein 7 (ARP7) of Arabidopsis thaliana (Mouse-ear cress).